A 176-amino-acid polypeptide reads, in one-letter code: F(420)H(2) dehydrogenase subunit J (176 aa).

Transmembrane regions (helical) follow at residues Thr-13–Ala-33, Ala-39–Ala-59, Val-64–Leu-84, Pro-99–Thr-119, and Ile-140–Leu-160.

This sequence belongs to the complex I subunit 6 family. As to quaternary structure, the FPO complex is composed of at least 13 different subunits. FpoA, FpoH, FpoJ, FpoK, FpoL, FpoM and FpoN proteins constitute the membrane sector of the complex.

It localises to the cell membrane. The enzyme catalyses methanophenazine + reduced coenzyme F420-(gamma-L-Glu)(n) = dihydromethanophenazine + oxidized coenzyme F420-(gamma-L-Glu)(n) + H(+). Functionally, component of the F(420)H(2) dehydrogenase (FPO complex) which is part of the energy-conserving F(420)H(2):heterodisulfide oxidoreductase system. The membrane-bound electron transfer system of the complex plays an important role in the metabolism of methylotrophic methanogens when the organisms grow on methanol or methylamines. Catalyzes the oxidation of methanophenazine to dihydromethanophenazine. It shuttles electrons from F(420)H(2), via FAD and iron-sulfur (Fe-S) centers, to methanophenazine (an electron carrier in the membrane). It couples the redox reaction to proton translocation (for every two electrons transferred, two hydrogen ions are translocated across the cytoplasmic membrane), and thus conserves the redox energy in a proton gradient. It also catalyzes the oxidation of F(420)H(2) with quinones such as 2,3-dimethyl-1,4-naphthoquinone, 2-methyl-1,4-naphthoquinone and tetramethyl-p-benzoquinone. In Methanosarcina mazei (strain ATCC BAA-159 / DSM 3647 / Goe1 / Go1 / JCM 11833 / OCM 88) (Methanosarcina frisia), this protein is F(420)H(2) dehydrogenase subunit J (fpoJ).